Here is a 185-residue protein sequence, read N- to C-terminus: Translation initiation factor IF-3 (185 aa).

The protein belongs to the IF-3 family. Monomer.

The protein resides in the cytoplasm. Its function is as follows. IF-3 binds to the 30S ribosomal subunit and shifts the equilibrium between 70S ribosomes and their 50S and 30S subunits in favor of the free subunits, thus enhancing the availability of 30S subunits on which protein synthesis initiation begins. This is Translation initiation factor IF-3 from Rickettsia prowazekii (strain Madrid E).